The primary structure comprises 585 residues: Trehalase (585 aa).

Residues 1–32 form the signal peptide; that stretch reads MAKTTPMAKPSVGLLTLQVLVFCALTGSLASA. Residues Arg-184 and 191 to 192 each bind substrate; that span reads WD. N-linked (GlcNAc...) asparagine glycosylation is present at Asn-207. Residues Asn-228, 237–239, 302–304, and Gly-336 contribute to the substrate site; these read RSQ and RPE. The active-site Proton donor/acceptor is the Asp-338. Residue Asn-348 is glycosylated (N-linked (GlcNAc...) asparagine). Glu-535 functions as the Proton donor/acceptor in the catalytic mechanism. Glu-550 lines the substrate pocket.

Belongs to the glycosyl hydrolase 37 family. As to expression, expressed by the venom gland.

The protein localises to the secreted. The enzyme catalyses alpha,alpha-trehalose + H2O = alpha-D-glucose + beta-D-glucose. This Pimpla hypochondriaca (Parasitoid wasp) protein is Trehalase (tre1).